The primary structure comprises 70 residues: Cold shock-like protein CspG (70 aa).

One can recognise a CSD domain in the interval 7–67 (GLVKWFNADK…GQRGPAAANV (61 aa)).

The protein resides in the cytoplasm. The polypeptide is Cold shock-like protein CspG (cspG) (Escherichia coli O157:H7).